The chain runs to 532 residues: Eukaryotic translation initiation factor 4B1 (532 aa).

Disordered stretches follow at residues 16 to 365 (EAER…LEEQ), 401 to 434 (KKLE…IIRG), and 451 to 532 (RFRQ…REGW). A compositionally biased stretch (low complexity) spans 26–35 (AEATAATADT). 2 stretches are compositionally biased toward gly residues: residues 105-120 (RLGG…SGGR) and 132-147 (WSGG…YGGG). Residues 167 to 180 (RADEVDDWGKEKKP) show a composition bias toward basic and acidic residues. The short motif at 177-184 (EKKPLPSF) is the Nuclear localization signal 1 element. The segment covering 193–217 (SGDGGGFGGGGSGFGGGGGGGGGGL) has biased composition (gly residues). The Nuclear localization signal 2 motif lies at 237 to 244 (SSTFGSSF). Residues 237-247 (SSTFGSSFGDS) show a composition bias toward low complexity. Basic and acidic residues-rich tracts occupy residues 249–263 (QEER…RKVE) and 286–310 (RPRE…EAKK). Residues 315–337 (TSRPTSAHSSRPSSAQSNRSESS) are compositionally biased toward low complexity. Composition is skewed to basic and acidic residues over residues 355 to 365 (AKPREVLLEEQ), 401 to 416 (KKLE…KESD), 472 to 494 (ERTH…ERPR), and 507 to 520 (NEQR…KERG).

Belongs to the eIF-4 subunit B family. As to quaternary structure, homodimer. Nonspherical monomer. mRNA-discriminating component of initiation complexes. Post-translationally, phosphorylated.

It is found in the nucleus. Its function is as follows. Promotes the eIF4F and eIF4A RNA-dependent ATP-hydrolysis activity with different efficiency depending on mRNAs, thus providing mRNA discrimination during initiation of translation. This is Eukaryotic translation initiation factor 4B1 from Arabidopsis thaliana (Mouse-ear cress).